Here is a 224-residue protein sequence, read N- to C-terminus: Biosynthetic peptidoglycan transglycosylase (224 aa).

The chain crosses the membrane as a helical span at residues 12–32 (ILVVLAILPVFLLLVYSLPFV).

Belongs to the glycosyltransferase 51 family.

It is found in the cell inner membrane. It carries out the reaction [GlcNAc-(1-&gt;4)-Mur2Ac(oyl-L-Ala-gamma-D-Glu-L-Lys-D-Ala-D-Ala)](n)-di-trans,octa-cis-undecaprenyl diphosphate + beta-D-GlcNAc-(1-&gt;4)-Mur2Ac(oyl-L-Ala-gamma-D-Glu-L-Lys-D-Ala-D-Ala)-di-trans,octa-cis-undecaprenyl diphosphate = [GlcNAc-(1-&gt;4)-Mur2Ac(oyl-L-Ala-gamma-D-Glu-L-Lys-D-Ala-D-Ala)](n+1)-di-trans,octa-cis-undecaprenyl diphosphate + di-trans,octa-cis-undecaprenyl diphosphate + H(+). The protein operates within cell wall biogenesis; peptidoglycan biosynthesis. Functionally, peptidoglycan polymerase that catalyzes glycan chain elongation from lipid-linked precursors. The sequence is that of Biosynthetic peptidoglycan transglycosylase from Brucella suis biovar 1 (strain 1330).